Here is a 139-residue protein sequence, read N- to C-terminus: MVGLSRLRGGGLLLVLALLPLALDGKPLEEAPTAPSRIIPFSRPVRKQSQAVLDPMVHPERPAGSGDDGDSRRLEGLAKEALGDGCFGQRIDRICNVSGMGCNHVRTDPAPTALARIIPFSRPVRKESRAALDRMQQPG.

An N-terminal signal peptide occupies residues 1–25; that stretch reads MVGLSRLRGGGLLLVLALLPLALDG. A propeptide spanning residues 26 to 75 is cleaved from the precursor; sequence KPLEEAPTAPSRIIPFSRPVRKQSQAVLDPMVHPERPAGSGDDGDSRRLE. A disordered region spans residues 45-72; the sequence is VRKQSQAVLDPMVHPERPAGSGDDGDSR. A disulfide bridge links Cys-86 with Cys-102. Residues 117–139 constitute a propeptide that is removed on maturation; that stretch reads IIPFSRPVRKESRAALDRMQQPG.

This sequence belongs to the natriuretic peptide family. As to expression, expressed by the venom gland.

The protein resides in the secreted. Its function is as follows. Snake venom natriuretic peptide that dose-dependently induces the rapid relaxation of rat aortic strips phenylephrine-precontracted. Acts by stimulating cGMP production in a dose-dependent manner (by probably activating NPR1 and/or NPR2). May also show potent hypotensive effects. A synthetic peptide (AA 77-108, where the Cys-95 is replaced by a Ser) increases sodium excretion and urinary volume in rat kidneys. The sequence is that of Natriuretic peptide Mc-NP from Micrurus corallinus (Brazilian coral snake).